The primary structure comprises 942 residues: Protein inturned (942 aa).

2 disordered regions span residues methionine 1–leucine 56 and leucine 128–valine 156. Residues serine 22–serine 32 are compositionally biased toward acidic residues. The segment covering aspartate 33–aspartate 48 has biased composition (low complexity). Polar residues predominate over residues serine 137–valine 156. In terms of domain architecture, PDZ spans leucine 185 to asparagine 267. Serine 674 and serine 678 each carry phosphoserine. The interval lysine 707 to aspartate 751 is disordered.

The protein belongs to the inturned family. As to quaternary structure, component of the CPLANE (ciliogenesis and planar polarity effectors) complex, composed of INTU, FUZ and WDPCP. Interacts with CPLANE1. Interacts with NPHP4 and DAAM1; INTU is mediating the interaction between NPHP4 and DAAM1. As to expression, widely expressed in E8.5 and E9.5 wild type embryos. Present in various adult organs (at protein level).

It is found in the cytoplasm. The protein localises to the cell surface. The protein resides in the cytoskeleton. Its subcellular location is the cilium basal body. It localises to the microtubule organizing center. It is found in the centrosome. The protein localises to the centriole. Functionally, plays a key role in ciliogenesis and embryonic development. Regulator of cilia formation by controlling the organization of the apical actin cytoskeleton and the positioning of the basal bodies at the apical cell surface, which in turn is essential for the normal orientation of elongating ciliary microtubules. Plays a key role in definition of cell polarity via its role in ciliogenesis but not via conversion extension. Has an indirect effect on hedgehog signaling. Proposed to function as core component of the CPLANE (ciliogenesis and planar polarity effectors) complex involved in the recruitment of peripheral IFT-A proteins to basal bodies. Required for recruitment of CPLANE2 to the mother centriole. Binds phosphatidylinositol 3-phosphate with highest affinity, followed by phosphatidylinositol 4-phosphate and phosphatidylinositol 5-phosphate. In Mus musculus (Mouse), this protein is Protein inturned (Intu).